The sequence spans 132 residues: MIKKRKKNPYEASASGFYISMSAHKARRIIDQIRGRSYEETLMILELMPYRACYPIFKLVYSAAANASHNMGLNEASLVISKAEVNEGATMKKFKPRARGRSYLIKRQTCHISIVLEDISYEEYEEDFLRRI.

It belongs to the universal ribosomal protein uL22 family. Part of the 50S ribosomal subunit.

It localises to the plastid. The protein localises to the chloroplast. Functionally, this protein binds specifically to 23S rRNA. The globular domain of the protein is located near the polypeptide exit tunnel on the outside of the subunit, while an extended beta-hairpin is found that lines the wall of the exit tunnel in the center of the 70S ribosome. The polypeptide is Large ribosomal subunit protein uL22c (rpl22) (Populus trichocarpa (Western balsam poplar)).